Here is a 158-residue protein sequence, read N- to C-terminus: Phosphopantetheine adenylyltransferase (158 aa).

Substrate is bound at residue T10. Residues 10–11 (TF) and H18 each bind ATP. Residues K42, L74, and R88 each contribute to the substrate site. Residues 89-91 (GIR), E99, and 124-130 (WRYLSST) each bind ATP.

The protein belongs to the bacterial CoaD family. As to quaternary structure, homohexamer. Mg(2+) serves as cofactor.

It is found in the cytoplasm. The catalysed reaction is (R)-4'-phosphopantetheine + ATP + H(+) = 3'-dephospho-CoA + diphosphate. Its pathway is cofactor biosynthesis; coenzyme A biosynthesis; CoA from (R)-pantothenate: step 4/5. Its function is as follows. Reversibly transfers an adenylyl group from ATP to 4'-phosphopantetheine, yielding dephospho-CoA (dPCoA) and pyrophosphate. The polypeptide is Phosphopantetheine adenylyltransferase (Actinobacillus pleuropneumoniae serotype 3 (strain JL03)).